A 273-amino-acid polypeptide reads, in one-letter code: Undecaprenyl-diphosphatase (273 aa).

A run of 8 helical transmembrane segments spans residues 13–35 (LGVV…IIVG), 45–65 (ANTF…VMFW), 90–110 (LSLI…LIFH), 116–136 (LFNP…LIAA), 157–177 (AFVI…RSGA), 190–210 (YAAS…ATVL), 222–242 (GDVP…LIAI), and 252–272 (ISFI…YVVF).

This sequence belongs to the UppP family.

It localises to the cell inner membrane. The catalysed reaction is di-trans,octa-cis-undecaprenyl diphosphate + H2O = di-trans,octa-cis-undecaprenyl phosphate + phosphate + H(+). Functionally, catalyzes the dephosphorylation of undecaprenyl diphosphate (UPP). Confers resistance to bacitracin. This is Undecaprenyl-diphosphatase from Klebsiella pneumoniae subsp. pneumoniae (strain ATCC 700721 / MGH 78578).